Reading from the N-terminus, the 120-residue chain is Glycine cleavage system H protein (120 aa).

A Lipoyl-binding domain is found at 19-101; the sequence is DGTVGISDFA…YTDGWLFRLD (83 aa). N6-lipoyllysine is present on lysine 60.

The protein belongs to the GcvH family. In terms of assembly, the glycine cleavage system is composed of four proteins: P, T, L and H. The cofactor is (R)-lipoate.

In terms of biological role, the glycine cleavage system catalyzes the degradation of glycine. The H protein shuttles the methylamine group of glycine from the P protein to the T protein. This chain is Glycine cleavage system H protein, found in Deinococcus geothermalis (strain DSM 11300 / CIP 105573 / AG-3a).